The chain runs to 111 residues: U-scoloptoxin(16)-Er8a (111 aa).

Residues 1–26 (MTSTRKLSVSCLIVFMVSSLIAVSSG) form the signal peptide.

The protein belongs to the scoloptoxin-16 family. Contains 4 disulfide bonds. Expressed by the venom gland.

The protein localises to the secreted. This Ethmostigmus rubripes (Giant centipede) protein is U-scoloptoxin(16)-Er8a.